A 73-amino-acid polypeptide reads, in one-letter code: Translation initiation factor IF-1 (73 aa).

The S1-like domain occupies 1-73 (MSEKEAGIEV…TRGRITYRDK (73 aa)).

It belongs to the IF-1 family. As to quaternary structure, component of the 30S ribosomal translation pre-initiation complex which assembles on the 30S ribosome in the order IF-2 and IF-3, IF-1 and N-formylmethionyl-tRNA(fMet); mRNA recruitment can occur at any time during PIC assembly.

It localises to the cytoplasm. One of the essential components for the initiation of protein synthesis. Stabilizes the binding of IF-2 and IF-3 on the 30S subunit to which N-formylmethionyl-tRNA(fMet) subsequently binds. Helps modulate mRNA selection, yielding the 30S pre-initiation complex (PIC). Upon addition of the 50S ribosomal subunit IF-1, IF-2 and IF-3 are released leaving the mature 70S translation initiation complex. The polypeptide is Translation initiation factor IF-1 (Anaeromyxobacter sp. (strain Fw109-5)).